Reading from the N-terminus, the 481-residue chain is Phospho-2-dehydro-3-deoxyheptonate aldolase (481 aa).

The tract at residues 1 to 22 (MSQQTTPNAPGWAPDSWRSKPI) is disordered.

This sequence belongs to the class-II DAHP synthase family. In terms of assembly, homodimer. Post-translationally, the N-terminus is blocked.

It catalyses the reaction D-erythrose 4-phosphate + phosphoenolpyruvate + H2O = 7-phospho-2-dehydro-3-deoxy-D-arabino-heptonate + phosphate. The protein operates within metabolic intermediate biosynthesis; chorismate biosynthesis; chorismate from D-erythrose 4-phosphate and phosphoenolpyruvate: step 1/7. The sequence is that of Phospho-2-dehydro-3-deoxyheptonate aldolase (aro-8) from Neurospora crassa (strain ATCC 24698 / 74-OR23-1A / CBS 708.71 / DSM 1257 / FGSC 987).